The following is a 215-amino-acid chain: MHFRALLVSALATLAMAAPAPTLEARQSLSSNELENGPCRDVTFIFARGSTEQGNMGFIVGPPTCTALKLKLGSDKVACQGVGGAYTANLLPNFLSQNTDPKSIAAATDMFQLARTKCPNTKIVTGGYSQGSAVIDNSVKALDDDLKSRVKAAVLFGFTRNVVDRGQIPNYPKDQVKVYCAVGDMVCYNTLIITAAHLTYGIYANDAANFLVSKL.

A signal peptide spans 1–17 (MHFRALLVSALATLAMA). Cystine bridges form between Cys39–Cys118 and Cys65–Cys79. Ser129 acts as the Nucleophile in catalysis. Residues Cys180 and Cys187 are joined by a disulfide bond. Residue Asp184 is part of the active site. The Proton donor/acceptor role is filled by His197.

This sequence belongs to the cutinase family.

It is found in the secreted. It catalyses the reaction cutin + H2O = cutin monomers.. Its function is as follows. Catalyzes the hydrolysis of complex carboxylic polyesters found in the cell wall of plants. Degrades cutin, a macromolecule that forms the structure of the plant cuticle. In Aspergillus clavatus (strain ATCC 1007 / CBS 513.65 / DSM 816 / NCTC 3887 / NRRL 1 / QM 1276 / 107), this protein is Probable cutinase 3.